Consider the following 292-residue polypeptide: MKDRENDGNLESRIFVGGLSWDVTERQLESTFDRYGKITECQIMVGRDTGRPRGFGFITFTDRRGADDAIKHMHGRELGNKVISVNKAEPKVGGEDVDQLKKGGGYSSRGKGTEDECFKCRRPGHWARDCPSTGDDRERFRVPLAMRSRIGDIDGHRDRYGDRDLEREREREREFDRYMDGRRDRDGGRYSYRDRFDSGDKYEPRDHYPFERYAPPGDRFVSDRYGMPEHHLENEYRGRERSYDRDRYARDTSDRYGDMGPIRDEGRPYRSRPGPYDRPSRPGGRPSSYERW.

The region spanning 12–90 (SRIFVGGLSW…KVISVNKAEP (79 aa)) is the RRM domain. Phosphoserine is present on serine 20. A disordered region spans residues 93–114 (GGEDVDQLKKGGGYSSRGKGTE). The segment at 117–132 (CFKCRRPGHWARDCPS) adopts a CCHC-type zinc-finger fold. 2 stretches are compositionally biased toward basic and acidic residues: residues 180–210 (DGRR…HYPF) and 220–268 (FVSD…EGRP). The tract at residues 180-292 (DGRRDRDGGR…GGRPSSYERW (113 aa)) is disordered.

In terms of tissue distribution, expressed in roots, rosette and cauline leaves, stems, floral buds and flowers.

Its subcellular location is the nucleus. Its function is as follows. Binds RNA and DNA sequences non-specifically. May be involved in tolerance to cold stress. The protein is Glycine-rich RNA-binding protein RZ1B of Arabidopsis thaliana (Mouse-ear cress).